A 123-amino-acid polypeptide reads, in one-letter code: Large ribosomal subunit protein uL29 (123 aa).

The protein belongs to the universal ribosomal protein uL29 family. In terms of assembly, component of the large ribosomal subunit.

Its subcellular location is the cytoplasm. In terms of biological role, component of the large ribosomal subunit. The ribosome is a large ribonucleoprotein complex responsible for the synthesis of proteins in the cell. In Platichthys flesus (European flounder), this protein is Large ribosomal subunit protein uL29 (rpl35).